We begin with the raw amino-acid sequence, 288 residues long: MTSIGTGYDLSNSVFSPDGRNFQVEYAVKAVENGTTSIGIKCNDGVVFAVEKLITSKLLVPQKNVKIQVVDRHIGCVYSGLIPDGRHLVNRGREEAASFKKLYKTPIPIPAFADRLGQYVQAHTLYNSVRPFGVSTIFGGVDKNGAHLYMLEPSGSYWGYKGAATGKGRQSAKAELEKLVDHHPEGLSAREAVKQAAKIIYLAHEDNKEKDFELEISWCSLSETNGLHKFVKGDLLQEAIDFAQKEINGDDDEDEDDSDNVMSSDDENAPVATNANATTDQEGDIHLE.

Residue Thr-2 is modified to N-acetylthreonine. Residues 247 to 288 form a disordered region; that stretch reads INGDDDEDEDDSDNVMSSDDENAPVATNANATTDQEGDIHLE. The segment covering 249-268 has biased composition (acidic residues); it reads GDDDEDEDDSDNVMSSDDEN. Over residues 269-279 the composition is skewed to low complexity; that stretch reads APVATNANATT.

This sequence belongs to the peptidase T1A family. As to quaternary structure, the 26S proteasome consists of a 20S proteasome core and two 19S regulatory subunits. The 20S proteasome core is composed of 28 subunits that are arranged in four stacked rings, resulting in a barrel-shaped structure. The two end rings are each formed by seven alpha subunits, and the two central rings are each formed by seven beta subunits. The catalytic chamber with the active sites is on the inside of the barrel. Post-translationally, the alpha and beta forms are probably products of the same gene with different post-translational modifications.

The protein resides in the cytoplasm. It is found in the nucleus. In terms of biological role, the proteasome degrades poly-ubiquitinated proteins in the cytoplasm and in the nucleus. It is essential for the regulated turnover of proteins and for the removal of misfolded proteins. The proteasome is a multicatalytic proteinase complex that is characterized by its ability to cleave peptides with Arg, Phe, Tyr, Leu, and Glu adjacent to the leaving group at neutral or slightly basic pH. It has an ATP-dependent proteolytic activity. The polypeptide is Probable proteasome subunit alpha type-7 (PRE10) (Saccharomyces cerevisiae (strain ATCC 204508 / S288c) (Baker's yeast)).